A 515-amino-acid polypeptide reads, in one-letter code: 3-[(3aS,4S,7aS)-7a-methyl-1,5-dioxo-octahydro-1H-inden-4-yl]propanoyl:CoA ligase (515 aa).

Residues 185–193 (TSGTTGRSK), D398, R413, and K504 each bind ATP.

This sequence belongs to the ATP-dependent AMP-binding enzyme family.

It catalyses the reaction 3-[(3aS,4S,7aS)-7a-methyl-1,5-dioxo-octahydro-1H-inden-4-yl]propanoate + ATP + CoA = 3-[(3aS,4S,7aS)-7a-methyl-1,5-dioxo-octahydro-1H-inden-4-yl]propanoyl-CoA + AMP + diphosphate. In terms of biological role, involved in the catabolism of the rings C and D of cholesterol. Catalyzes the ATP-dependent CoA thioesterification of 3aalpha-H-4alpha(3'-propanoate)-7abeta-methylhexahydro-1,5-indanedione (HIP). This chain is 3-[(3aS,4S,7aS)-7a-methyl-1,5-dioxo-octahydro-1H-inden-4-yl]propanoyl:CoA ligase, found in Rhodococcus jostii (strain RHA1).